We begin with the raw amino-acid sequence, 488 residues long: Glutamyl-tRNA(Gln) amidotransferase subunit A (488 aa).

Residues K77 and S152 each act as charge relay system in the active site. Catalysis depends on S176, which acts as the Acyl-ester intermediate.

The protein belongs to the amidase family. GatA subfamily. In terms of assembly, heterotrimer of A, B and C subunits.

It catalyses the reaction L-glutamyl-tRNA(Gln) + L-glutamine + ATP + H2O = L-glutaminyl-tRNA(Gln) + L-glutamate + ADP + phosphate + H(+). In terms of biological role, allows the formation of correctly charged Gln-tRNA(Gln) through the transamidation of misacylated Glu-tRNA(Gln) in organisms which lack glutaminyl-tRNA synthetase. The reaction takes place in the presence of glutamine and ATP through an activated gamma-phospho-Glu-tRNA(Gln). This Streptococcus uberis (strain ATCC BAA-854 / 0140J) protein is Glutamyl-tRNA(Gln) amidotransferase subunit A.